A 216-amino-acid polypeptide reads, in one-letter code: Phosphoenolpyruvate guanylyltransferase (216 aa).

Phosphoenolpyruvate-binding residues include Thr-143, Gly-159, and Ser-162.

It belongs to the CofC family.

It catalyses the reaction phosphoenolpyruvate + GTP + H(+) = enolpyruvoyl-2-diphospho-5'-guanosine + diphosphate. It functions in the pathway cofactor biosynthesis; coenzyme F420 biosynthesis. Guanylyltransferase that catalyzes the activation of phosphoenolpyruvate (PEP) as enolpyruvoyl-2-diphospho-5'-guanosine, via the condensation of PEP with GTP. It is involved in the biosynthesis of coenzyme F420, a hydride carrier cofactor. The polypeptide is Phosphoenolpyruvate guanylyltransferase (Streptomyces scabiei (strain 87.22)).